Consider the following 181-residue polypeptide: Peptidyl-tRNA hydrolase (181 aa).

Tyr14 is a binding site for tRNA. Catalysis depends on His19, which acts as the Proton acceptor. TRNA is bound by residues Phe61, Asn63, and Asn107.

Belongs to the PTH family. As to quaternary structure, monomer.

It localises to the cytoplasm. It catalyses the reaction an N-acyl-L-alpha-aminoacyl-tRNA + H2O = an N-acyl-L-amino acid + a tRNA + H(+). Hydrolyzes ribosome-free peptidyl-tRNAs (with 1 or more amino acids incorporated), which drop off the ribosome during protein synthesis, or as a result of ribosome stalling. Its function is as follows. Catalyzes the release of premature peptidyl moieties from peptidyl-tRNA molecules trapped in stalled 50S ribosomal subunits, and thus maintains levels of free tRNAs and 50S ribosomes. The protein is Peptidyl-tRNA hydrolase of Campylobacter fetus subsp. fetus (strain 82-40).